The primary structure comprises 314 residues: Small ribosomal subunit biogenesis GTPase RsgA (314 aa).

Residues 1-21 (MKRAPTKQPAKPAARGGERAQ) are disordered. One can recognise a CP-type G domain in the interval 85–246 (SDQFKSKLFA…LIDSPGFQEF (162 aa)). GTP contacts are provided by residues 134–137 (NKID) and 188–196 (GQSGMGKST). The Zn(2+) site is built by cysteine 270, cysteine 275, histidine 277, and cysteine 283.

It belongs to the TRAFAC class YlqF/YawG GTPase family. RsgA subfamily. Monomer. Associates with 30S ribosomal subunit, binds 16S rRNA. The cofactor is Zn(2+).

The protein resides in the cytoplasm. Functionally, one of several proteins that assist in the late maturation steps of the functional core of the 30S ribosomal subunit. Helps release RbfA from mature subunits. May play a role in the assembly of ribosomal proteins into the subunit. Circularly permuted GTPase that catalyzes slow GTP hydrolysis, GTPase activity is stimulated by the 30S ribosomal subunit. The polypeptide is Small ribosomal subunit biogenesis GTPase RsgA (Burkholderia mallei (strain ATCC 23344)).